Here is a 1006-residue protein sequence, read N- to C-terminus: Unconventional myosin-Id (1006 aa).

Position 2 is an N-acetylalanine (alanine 2). In terms of domain architecture, Myosin motor spans 9 to 695; sequence FGKADFVLMD…TLFTLEELRA (687 aa). 102–109 is an ATP binding site; the sequence is GESGAGKT. Serine 200 carries the post-translational modification Phosphoserine. At tyrosine 536 the chain carries Phosphotyrosine. The interval 572 to 594 is actin-binding; that stretch reads MIALVDNLASKEPYYVRCIKPND. IQ domains are found at residues 699-719 and 721-741; these read VRVV…MRYK and TKAA…SYIH. The 194-residue stretch at 812–1005 folds into the TH1 domain; that stretch reads GQRADLGLQR…RSGFILSVPG (194 aa).

The protein belongs to the TRAFAC class myosin-kinesin ATPase superfamily. Myosin family. Interacts (via the two IQ motifs) with calmodulin. Binds an additional calmodulin chain via a third, C-terminal region. Interacts with F-actin. In terms of tissue distribution, detected in enterocytes at the intestinal brush border membrane. Detected at the tip of intestinal microvilli (at protein level).

It localises to the cytoplasm. Its subcellular location is the perikaryon. It is found in the cell projection. The protein localises to the dendrite. The protein resides in the early endosome. It localises to the cell cortex. Its subcellular location is the basolateral cell membrane. Its function is as follows. Unconventional myosin that functions as actin-based motor protein with ATPase activity. Plays a role in endosomal protein trafficking, and especially in the transfer of cargo proteins from early to recycling endosomes. Required for normal planar cell polarity in ciliated tracheal cells, for normal rotational polarity of cilia, and for coordinated, unidirectional ciliary movement in the trachea. Required for normal, polarized cilia organization in brain ependymal epithelial cells. In Mus musculus (Mouse), this protein is Unconventional myosin-Id.